A 275-amino-acid polypeptide reads, in one-letter code: uncharacterized protein (275 aa).

[4Fe-4S] cluster-binding residues include Cys-97, Cys-102, Cys-136, and Cys-140. Siroheme is bound at residue Cys-140.

This sequence belongs to the nitrite and sulfite reductase 4Fe-4S domain family.

This is an uncharacterized protein from Methanocaldococcus jannaschii (strain ATCC 43067 / DSM 2661 / JAL-1 / JCM 10045 / NBRC 100440) (Methanococcus jannaschii).